A 66-amino-acid chain; its full sequence is Movement protein TGBp3 (66 aa).

At 1 to 2 (MD) the chain is on the lumenal side. The chain crosses the membrane as a helical span at residues 3 to 23 (FTTLIIIGVYLLVFIVYFAKI). The Cytoplasmic portion of the chain corresponds to 24-66 (NTSVCTISISGASIEISGCDNPTLFEILPKLRPFNHGLSLPSN).

The protein belongs to the Tymovirales TGBp3 protein family.

It localises to the host endoplasmic reticulum membrane. Functionally, plays a role in viral cell-to-cell propagation, by facilitating genome transport to neighboring plant cells through plasmosdesmata. May induce the formation of granular vesicles derived from the Endoplasmic reticulum, which align on actin filaments. This Trifolium (WCMV) protein is Movement protein TGBp3.